Consider the following 510-residue polypeptide: Mitochondrial metal transporter 1 (510 aa).

Positions 120–141 (ADKPSSLNLHSHTHSHGHTHSH) are disordered. Over residues 130 to 141 (SHTHSHGHTHSH) the composition is skewed to basic residues. 6 consecutive transmembrane segments (helical) span residues 165–185 (WVGLGVNVGIAIGKFFGGIVF), 194–214 (AIHAISDMVSDLLTLLSVGLA), 241–261 (LAMAGISIGWSSLCALVGPVI), 286–306 (VTDINAAWIAAASIAAKEWIF), 333–353 (LTSLVALVAISTGYLVNIQSL), and 356–376 (IGGLIVSGLIIKAGGEGMCIA).

It belongs to the cation diffusion facilitator (CDF) transporter (TC 2.A.4) family. SLC30A subfamily.

Its subcellular location is the mitochondrion membrane. Mitochondrial metal transporter involved in mitochondrial iron accumulation. The chain is Mitochondrial metal transporter 1 (MMT1) from Saccharomyces cerevisiae (strain ATCC 204508 / S288c) (Baker's yeast).